We begin with the raw amino-acid sequence, 630 residues long: Pentatricopeptide repeat-containing protein At1g63130, mitochondrial (630 aa).

The transit peptide at 1 to 22 (MRRLFAISSTGNRFVHRSLLGK) directs the protein to the mitochondrion. PPR repeat units follow at residues 80–114 (SIVE…GISH), 115–149 (NLYT…GYEP), 150–184 (DIVT…GYQP), 185–219 (DSFT…GCQP), 220–254 (DLVT…KIEP), 255–289 (GVVI…GIRP), 290–324 (NVVT…KINP), 325–359 (NVVT…SIDP), 360–394 (DIFT…DCFP), 395–429 (NVVT…GLVG), 430–464 (NTVT…GVLP), 465–499 (DIMT…KMEP), 500–534 (DIYT…GVKP), 535–569 (NVVT…GPLP), and 570–604 (DSGT…RFVG).

Belongs to the PPR family. P subfamily.

The protein resides in the mitochondrion. The polypeptide is Pentatricopeptide repeat-containing protein At1g63130, mitochondrial (Arabidopsis thaliana (Mouse-ear cress)).